A 79-amino-acid polypeptide reads, in one-letter code: D-alanyl carrier protein (79 aa).

The 77-residue stretch at 1–77 (MDTKQAVLDI…KIIAKVESLR (77 aa)) folds into the Carrier domain. The residue at position 35 (Ser-35) is an O-(pantetheine 4'-phosphoryl)serine.

It belongs to the DltC family. 4'-phosphopantetheine is transferred from CoA to a specific serine of apo-DCP.

Its subcellular location is the cytoplasm. It functions in the pathway cell wall biogenesis; lipoteichoic acid biosynthesis. In terms of biological role, carrier protein involved in the D-alanylation of lipoteichoic acid (LTA). The loading of thioester-linked D-alanine onto DltC is catalyzed by D-alanine--D-alanyl carrier protein ligase DltA. The DltC-carried D-alanyl group is further transferred to cell membrane phosphatidylglycerol (PG) by forming an ester bond, probably catalyzed by DltD. D-alanylation of LTA plays an important role in modulating the properties of the cell wall in Gram-positive bacteria, influencing the net charge of the cell wall. The sequence is that of D-alanyl carrier protein from Lactobacillus johnsonii (strain CNCM I-12250 / La1 / NCC 533).